Consider the following 145-residue polypeptide: Superoxide dismutase [Mn/Fe] (145 aa).

Fe(3+)-binding residues include H10 and H64. Mn(2+) is bound by residues H10 and H64.

This sequence belongs to the iron/manganese superoxide dismutase family. It depends on Mn(2+) as a cofactor. Requires Fe(3+) as cofactor.

It catalyses the reaction 2 superoxide + 2 H(+) = H2O2 + O2. Functionally, destroys superoxide anion radicals which are normally produced within the cells and which are toxic to biological systems. Catalyzes the dismutation of superoxide anion radicals into O2 and H2O2 by successive reduction and oxidation of the transition metal ion at the active site. This is Superoxide dismutase [Mn/Fe] (sodA) from Streptococcus alactolyticus.